Here is a 380-residue protein sequence, read N- to C-terminus: tRNA(Met) cytidine acetate ligase (380 aa).

ATP contacts are provided by residues 7 to 20, glycine 101, asparagine 151, and arginine 176; that span reads IAEY…HLYQ.

The protein belongs to the TmcAL family.

Its subcellular location is the cytoplasm. The catalysed reaction is cytidine(34) in elongator tRNA(Met) + acetate + ATP = N(4)-acetylcytidine(34) in elongator tRNA(Met) + AMP + diphosphate. Its function is as follows. Catalyzes the formation of N(4)-acetylcytidine (ac(4)C) at the wobble position of elongator tRNA(Met), using acetate and ATP as substrates. First activates an acetate ion to form acetyladenylate (Ac-AMP) and then transfers the acetyl group to tRNA to form ac(4)C34. The polypeptide is tRNA(Met) cytidine acetate ligase (Ligilactobacillus salivarius (strain UCC118) (Lactobacillus salivarius)).